A 103-amino-acid polypeptide reads, in one-letter code: Small ribosomal subunit protein uS10 (103 aa).

This sequence belongs to the universal ribosomal protein uS10 family. As to quaternary structure, part of the 30S ribosomal subunit.

Functionally, involved in the binding of tRNA to the ribosomes. In Persephonella marina (strain DSM 14350 / EX-H1), this protein is Small ribosomal subunit protein uS10.